The following is a 412-amino-acid chain: Sexual development regulator umv3 (412 aa).

A disordered region spans residues 1–197; sequence MSAQDDIDTG…PPLLSDLPRH (197 aa). 2 stretches are compositionally biased toward polar residues: residues 73-93 and 149-170; these read RANTLSKQQPRGDLSQSSASS and RQSAASNRLSDTNSSAPSPGST. Positions 171-181 are enriched in basic and acidic residues; the sequence is ENERVRMHDQR. Residues 195 to 388 form the Velvet domain; that stretch reads PRHSTDNKTY…ARQGIQVPVR (194 aa).

It belongs to the velvet family. VelC subfamily.

It localises to the nucleus. Velvet-domain-containing protein not required for disease or sexual development on seedlings. This chain is Sexual development regulator umv3, found in Mycosarcoma maydis (Corn smut fungus).